Here is a 504-residue protein sequence, read N- to C-terminus: Doublesex- and mab-3-related transcription factor A1 (504 aa).

Positions 1–13 (MERSQCGSRDRGV) are enriched in basic and acidic residues. Positions 1–27 (MERSQCGSRDRGVSGRPHLAPGLVVAA) are disordered. The segment at residues 97–144 (CARCRNHGVVSALKGHKRFCRWRDCACAKCTLIAERQRVMAAQVALRR) is a DNA-binding region (DM). Disordered stretches follow at residues 170 to 192 (GRAS…AAGA) and 266 to 307 (SISE…NESE). The segment covering 293–306 (RSLSSSDLESGNES) has biased composition (low complexity). One can recognise a DMA domain in the interval 327 to 362 (RDPLDILTKIFPNYRRSRLEGILRFCKGDVVQAIEQ).

Belongs to the DMRT family. In terms of tissue distribution, expressed in liver, kidney, pancreas, prostate and weakly detected in testis and ovary.

It is found in the nucleus. The sequence is that of Doublesex- and mab-3-related transcription factor A1 (DMRTA1) from Homo sapiens (Human).